The sequence spans 198 residues: Ribonuclease HII (198 aa).

In terms of domain architecture, RNase H type-2 spans 10–198 (QLVAGVDEVG…PVKRALGLAS (189 aa)). 3 residues coordinate a divalent metal cation: aspartate 16, glutamate 17, and aspartate 108.

This sequence belongs to the RNase HII family. Mn(2+) is required as a cofactor. Mg(2+) serves as cofactor.

The protein localises to the cytoplasm. The enzyme catalyses Endonucleolytic cleavage to 5'-phosphomonoester.. In terms of biological role, endonuclease that specifically degrades the RNA of RNA-DNA hybrids. This Shigella boydii serotype 18 (strain CDC 3083-94 / BS512) protein is Ribonuclease HII.